The sequence spans 330 residues: Cathepsin S (330 aa).

The N-terminal stretch at 1 to 17 (MKQLVCVLFVCSSAVTQ) is a signal peptide. Positions 18–114 (LHKDPTLDHH…ITYKSNPNQM (97 aa)) are cleaved as a propeptide — activation peptide. N104 carries N-linked (GlcNAc...) asparagine glycosylation. 4 disulfide bridges follow: C126–C223, C136–C179, C170–C212, and C271–C319. C139 is an active-site residue. Active-site residues include H277 and N297.

The protein belongs to the peptidase C1 family.

The protein localises to the lysosome. The protein resides in the secreted. Its subcellular location is the cytoplasmic vesicle. It localises to the phagosome. The catalysed reaction is Similar to cathepsin L, but with much less activity on Z-Phe-Arg-|-NHMec, and more activity on the Z-Val-Val-Arg-|-Xaa compound.. Its function is as follows. Thiol protease. Key protease responsible for the removal of the invariant chain from MHC class II molecules and MHC class II antigen presentation. The bond-specificity of this proteinase is in part similar to the specificities of cathepsin L. This Saimiri boliviensis boliviensis (Bolivian squirrel monkey) protein is Cathepsin S (CTSS).